The sequence spans 207 residues: Probable GTP-binding protein EngB (207 aa).

Positions 22–194 constitute an EngB-type G domain; sequence DLPEIAFAGR…WRRIEEVLPA (173 aa). GTP-binding positions include 30–37, 57–61, 75–78, 142–145, and 173–175; these read GRSNVGKS, GRTQL, DLPG, TKCD, and FSA. 2 residues coordinate Mg(2+): S37 and T59.

It belongs to the TRAFAC class TrmE-Era-EngA-EngB-Septin-like GTPase superfamily. EngB GTPase family. The cofactor is Mg(2+).

Functionally, necessary for normal cell division and for the maintenance of normal septation. In Geotalea daltonii (strain DSM 22248 / JCM 15807 / FRC-32) (Geobacter daltonii), this protein is Probable GTP-binding protein EngB.